Reading from the N-terminus, the 122-residue chain is Large ribosomal subunit protein uL14 (122 aa).

This sequence belongs to the universal ribosomal protein uL14 family. As to quaternary structure, part of the 50S ribosomal subunit. Forms a cluster with proteins L3 and L19. In the 70S ribosome, L14 and L19 interact and together make contacts with the 16S rRNA in bridges B5 and B8.

Its function is as follows. Binds to 23S rRNA. Forms part of two intersubunit bridges in the 70S ribosome. The sequence is that of Large ribosomal subunit protein uL14 from Chlamydia pneumoniae (Chlamydophila pneumoniae).